Reading from the N-terminus, the 765-residue chain is Putative maltooligosyl trehalose synthase (765 aa).

This sequence belongs to the glycosyl hydrolase 13 family. In terms of assembly, monomer.

It carries out the reaction 4-[(1-&gt;4)-alpha-D-glucosyl](n-1)-D-glucose = 1-[(1-&gt;4)-alpha-D-glucosyl](n-1)-alpha-D-glucose. In terms of biological role, catalyzes the conversion of maltooligosaccharide into the non-reducing saccharide, maltooligosyl trehalose (alpha-maltooligosyl alpha-D-glucoside) by intramolecular transglycosylation. In Mycobacterium tuberculosis (strain CDC 1551 / Oshkosh), this protein is Putative maltooligosyl trehalose synthase (treY).